Consider the following 198-residue polypeptide: Glycerol-3-phosphate acyltransferase (198 aa).

Helical transmembrane passes span 6 to 26 (FLPV…GLIL), 55 to 75 (GLAA…VIIS), 83 to 103 (AAMI…WLKF), 113 to 133 (IGIL…VWLA), and 154 to 174 (IVLW…LTLL).

It belongs to the PlsY family. Probably interacts with PlsX.

It localises to the cell inner membrane. It carries out the reaction an acyl phosphate + sn-glycerol 3-phosphate = a 1-acyl-sn-glycero-3-phosphate + phosphate. It functions in the pathway lipid metabolism; phospholipid metabolism. Its function is as follows. Catalyzes the transfer of an acyl group from acyl-phosphate (acyl-PO(4)) to glycerol-3-phosphate (G3P) to form lysophosphatidic acid (LPA). This enzyme utilizes acyl-phosphate as fatty acyl donor, but not acyl-CoA or acyl-ACP. The chain is Glycerol-3-phosphate acyltransferase from Bradyrhizobium sp. (strain BTAi1 / ATCC BAA-1182).